The following is a 104-amino-acid chain: Thioredoxin (104 aa).

The Thioredoxin domain maps to 2–104; the sequence is AIVKATDQSF…ALQELVNKHL (103 aa). A disulfide bridge links Cys29 with Cys32.

Belongs to the thioredoxin family.

Participates in various redox reactions through the reversible oxidation of its active center dithiol to a disulfide and catalyzes dithiol-disulfide exchange reactions. The protein is Thioredoxin (trxA) of Bacillus subtilis (strain 168).